Consider the following 338-residue polypeptide: Methionine import ATP-binding protein MetN 1 (338 aa).

In terms of domain architecture, ABC transporter spans 2 to 241 (IELHQVSKSF…AKHATTKRFV (240 aa)). 38–45 (GYSGAGKS) lines the ATP pocket.

The protein belongs to the ABC transporter superfamily. Methionine importer (TC 3.A.1.24) family. As to quaternary structure, the complex is composed of two ATP-binding proteins (MetN), two transmembrane proteins (MetI) and a solute-binding protein (MetQ).

It localises to the cell membrane. The enzyme catalyses L-methionine(out) + ATP + H2O = L-methionine(in) + ADP + phosphate + H(+). It catalyses the reaction D-methionine(out) + ATP + H2O = D-methionine(in) + ADP + phosphate + H(+). Its function is as follows. Part of the ABC transporter complex MetNIQ involved in methionine import. Responsible for energy coupling to the transport system. This Listeria monocytogenes serotype 4b (strain F2365) protein is Methionine import ATP-binding protein MetN 1.